We begin with the raw amino-acid sequence, 84 residues long: uncharacterized protein (84 aa).

Basic residues-rich tracts occupy residues 1 to 15 (MPPHGHHHHGHHGHH) and 67 to 84 (HHGHHGHHGHHGHHGHFF). Disordered stretches follow at residues 1–22 (MPPHGHHHHGHHGHHEHVTYTT) and 64–84 (TSHHHGHHGHHGHHGHHGHFF).

This is an uncharacterized protein from Dictyostelium discoideum (Social amoeba).